Here is a 420-residue protein sequence, read N- to C-terminus: MSPPPLLQPLLLLLPLLNVEPSGATLIRIPLHRVQPGRRILNLLRGWREPAELPKLGAPSPGDKPIFVPLSNYRDVQYFGEIGLGTPPQNFTVAFDTGSSNLWVPSRRCHFFSVPCWLHHRFDPKASSSFQANGTKFAIQYGTGRVDGILSEDKLTIGGIKGASVIFGEALWEPSLVFAFAHFDGILGLGFPILSVEGVRPPMDVLVEQGLLDKPVFSFYLNRDPEEPDGGELVLGGSDPAHYIPPLTFVPVTVPAYWQIHMERVKVGPGLTLCAKGCAAILDTGTSLITGPTEEIRALHAAIGGIPLLAGEYIILCSEIPKLPAVSFLLGGVWFNLTAHDYVIQTTRNGVRLCLSGFQALDVPPPAGPFWILGDVFLGTYVAVFDRGDMKSSARVGLARARTRGADLGWGETAQAQFPG.

The first 25 residues, 1-25 (MSPPPLLQPLLLLLPLLNVEPSGAT), serve as a signal peptide directing secretion. Positions 26–63 (LIRIPLHRVQPGRRILNLLRGWREPAELPKLGAPSPGD) are cleaved as a propeptide — activation peptide. The 322-residue stretch at 78-399 (YFGEIGLGTP…MKSSARVGLA (322 aa)) folds into the Peptidase A1 domain. Asparagine 90 is a glycosylation site (N-linked (GlcNAc...) asparagine). The active site involves aspartate 96. Cysteine 109 and cysteine 116 are disulfide-bonded. Asparagine 133 carries an N-linked (GlcNAc...) asparagine glycan. Residues cysteine 274 and cysteine 278 are joined by a disulfide bond. Residue aspartate 283 is part of the active site. Cysteine 317 and cysteine 354 are disulfide-bonded. The N-linked (GlcNAc...) asparagine glycan is linked to asparagine 336.

It belongs to the peptidase A1 family. In terms of tissue distribution, expressed predominantly in adult lung (type II pneumocytes) and kidney and in fetal lung. Low levels in adult spleen and very low levels in peripheral blood leukocytes.

Its subcellular location is the secreted. In terms of biological role, may be involved in processing of pneumocyte surfactant precursors. The polypeptide is Napsin-A (NAPSA) (Homo sapiens (Human)).